The chain runs to 1412 residues: DNA-directed RNA polymerase subunit beta' (1412 aa).

Residues C70, C72, C85, and C88 each contribute to the Zn(2+) site. Positions 460, 462, and 464 each coordinate Mg(2+). Zn(2+) is bound by residues C819, C893, C900, and C903. The tract at residues 1392–1412 (EEAFEFGTPSTPAEEPQHPAE) is disordered.

Belongs to the RNA polymerase beta' chain family. In terms of assembly, the RNAP catalytic core consists of 2 alpha, 1 beta, 1 beta' and 1 omega subunit. When a sigma factor is associated with the core the holoenzyme is formed, which can initiate transcription. Requires Mg(2+) as cofactor. It depends on Zn(2+) as a cofactor.

The catalysed reaction is RNA(n) + a ribonucleoside 5'-triphosphate = RNA(n+1) + diphosphate. In terms of biological role, DNA-dependent RNA polymerase catalyzes the transcription of DNA into RNA using the four ribonucleoside triphosphates as substrates. In Burkholderia thailandensis (strain ATCC 700388 / DSM 13276 / CCUG 48851 / CIP 106301 / E264), this protein is DNA-directed RNA polymerase subunit beta'.